Consider the following 673-residue polypeptide: UvrABC system protein B (673 aa).

The region spanning 30 to 417 (NSILLGNKYQ…SSVVVDQIIR (388 aa)) is the Helicase ATP-binding domain. 43–50 (GVTGSGKT) is an ATP binding site. Residues 96–119 (YYDYYQPESYVPSKDLFIEKEATI) carry the Beta-hairpin motif. Residues 434-600 (QMEDLYSEIQ…TIVKKIQNIL (167 aa)) enclose the Helicase C-terminal domain. Residues 627–662 (KKLIDKLKFDLEEAVNDERFEDAIVLRDKIKELSSK) form the UVR domain.

This sequence belongs to the UvrB family. In terms of assembly, forms a heterotetramer with UvrA during the search for lesions. Interacts with UvrC in an incision complex.

The protein localises to the cytoplasm. In terms of biological role, the UvrABC repair system catalyzes the recognition and processing of DNA lesions. A damage recognition complex composed of 2 UvrA and 2 UvrB subunits scans DNA for abnormalities. Upon binding of the UvrA(2)B(2) complex to a putative damaged site, the DNA wraps around one UvrB monomer. DNA wrap is dependent on ATP binding by UvrB and probably causes local melting of the DNA helix, facilitating insertion of UvrB beta-hairpin between the DNA strands. Then UvrB probes one DNA strand for the presence of a lesion. If a lesion is found the UvrA subunits dissociate and the UvrB-DNA preincision complex is formed. This complex is subsequently bound by UvrC and the second UvrB is released. If no lesion is found, the DNA wraps around the other UvrB subunit that will check the other stand for damage. This chain is UvrABC system protein B, found in Borreliella burgdorferi (strain ATCC 35210 / DSM 4680 / CIP 102532 / B31) (Borrelia burgdorferi).